Reading from the N-terminus, the 156-residue chain is Small ribosomal subunit protein uS7 (156 aa).

Belongs to the universal ribosomal protein uS7 family. As to quaternary structure, part of the 30S ribosomal subunit. Contacts proteins S9 and S11.

Functionally, one of the primary rRNA binding proteins, it binds directly to 16S rRNA where it nucleates assembly of the head domain of the 30S subunit. Is located at the subunit interface close to the decoding center, probably blocks exit of the E-site tRNA. This Neisseria gonorrhoeae (strain ATCC 700825 / FA 1090) protein is Small ribosomal subunit protein uS7.